Here is a 473-residue protein sequence, read N- to C-terminus: Phosphoglucosamine mutase (473 aa).

S102 acts as the Phosphoserine intermediate in catalysis. S102, D248, D250, and D252 together coordinate Mg(2+). S102 is subject to Phosphoserine.

The protein belongs to the phosphohexose mutase family. It depends on Mg(2+) as a cofactor. Post-translationally, activated by phosphorylation.

It catalyses the reaction alpha-D-glucosamine 1-phosphate = D-glucosamine 6-phosphate. Catalyzes the conversion of glucosamine-6-phosphate to glucosamine-1-phosphate. This chain is Phosphoglucosamine mutase, found in Rhodospirillum centenum (strain ATCC 51521 / SW).